A 520-amino-acid chain; its full sequence is Sodium-dependent dicarboxylate transporter SdcS (520 aa).

A run of 14 helical transmembrane segments spans residues 30–50 (AGQL…LLFF), 55–75 (LPWK…WWIT), 77–97 (AIPI…GHIL), 104–124 (SEYG…AIAM), 160–180 (SMFV…LAII), 207–227 (IGYA…PLII), 242–262 (FAKW…ITWL), 298–318 (KVVQ…EFLL), 323–343 (VTSS…LFVI), 362–382 (ELPW…KGIS), 399–419 (GVSP…LTEV), 428–448 (MILP…LLLM), 452–472 (AMAA…AIIF), and 491–511 (LISA…VLGI).

It belongs to the SLC13A/DASS transporter (TC 2.A.47) family. NADC subfamily.

The protein localises to the cell membrane. Functionally, mediates the transport of the dicarboxylates fumarate, malate, and succinate across the cytoplasmic membrane via a Na(+)-electrochemical gradient. The polypeptide is Sodium-dependent dicarboxylate transporter SdcS (sdcS) (Staphylococcus aureus (strain MSSA476)).